Here is a 28-residue protein sequence, read N- to C-terminus: XIIGAPCRRCYHSDGKGGCVRDWSCGQQ.

Proline 6 carries the post-translational modification 4-hydroxyproline; in form SHTX-1 (Shd1a). Cystine bridges form between cysteine 7–cysteine 19 and cysteine 10–cysteine 25.

Belongs to the sea anemone BBH family. Post-translationally, occurs in 2 forms which differ in the post-translational modification of Pro-6. In form SHTX-1 (Shd1a) Pro-6 is a hydroxyproline while in form SHTX-2 (Shd1b) Pro-6 is unmodified.

The protein localises to the secreted. It localises to the nematocyst. Kappa-stichotoxin-Shd1a: inhibits voltage-gated potassium channels (Kv). In terms of biological role, kappa-stichotoxin-Shd1b: inhibits voltage-gated potassium channels (Kv). This toxin inhibits the binding of 125I-alpha-dendrotoxin to synaptosomal membranes (IC(50)=270 nM). This chain is Kappa-stichotoxin-Shd1a/kappa-stichotoxin-Shd1b, found in Stichodactyla haddoni (Saddle carpet anemone).